A 453-amino-acid chain; its full sequence is NADH-quinone oxidoreductase subunit D (453 aa).

A compositionally biased stretch (basic and acidic residues) spans 1-21 (MKDTETRPGRHRAPEPAHPEQ). The segment at 1 to 30 (MKDTETRPGRHRAPEPAHPEQPDTTGDTVV) is disordered.

It belongs to the complex I 49 kDa subunit family. In terms of assembly, NDH-1 is composed of 14 different subunits. Subunits NuoB, C, D, E, F, and G constitute the peripheral sector of the complex.

Its subcellular location is the cell membrane. The enzyme catalyses a quinone + NADH + 5 H(+)(in) = a quinol + NAD(+) + 4 H(+)(out). Functionally, NDH-1 shuttles electrons from NADH, via FMN and iron-sulfur (Fe-S) centers, to quinones in the respiratory chain. The immediate electron acceptor for the enzyme in this species is believed to be a menaquinone. Couples the redox reaction to proton translocation (for every two electrons transferred, four hydrogen ions are translocated across the cytoplasmic membrane), and thus conserves the redox energy in a proton gradient. This is NADH-quinone oxidoreductase subunit D from Nocardia farcinica (strain IFM 10152).